A 240-amino-acid polypeptide reads, in one-letter code: LOB domain-containing protein 39 (240 aa).

Positions 1–107 (MSCNGCRVLR…VETVLRGGTL (107 aa)) constitute an LOB domain. A disordered region spans residues 200 to 233 (GDRPGSPSEESVTTSCWENGMRGDNKQKRNKGEK). Over residues 207-216 (SEESVTTSCW) the composition is skewed to polar residues.

The protein belongs to the LOB domain-containing protein family. As to expression, expressed in young shoots, roots, stems, leaves and flowers.

In Arabidopsis thaliana (Mouse-ear cress), this protein is LOB domain-containing protein 39 (LBD39).